The primary structure comprises 507 residues: MASHDYLKKILTARVYDVAFETELEPARNLSARLRNPVYLKREDNQPVFSFKLRGAYNKMAHIPADALARGVITASAGNHAQGVAFSAARMGVKAVIVVPVTTPQVKVDAVRAHGGPGVEVIQAGESYSDAYAHALKVQEERGLTFVHPFDDPYVIAGQGTIAMEILRQHQGPIHAIFVPIGGGGLAAGVAAYVKAVRPEIKVIGVQAEDSCAMAQSLQAGKRVELAEVGLFADGTAVKLVGEETFRLCKEYLDGVVTVDTDALCAAIKDVFQDTRSVLEPSGALAVAGAKLYAEREGIENQTLVAVTSGANMNFDRMRFVAERAEVGEAREAVFAVTIPEERGSFKRFCSLVGDRNVTEFNYRIADAQSAHIFVGVQIRRRGESADIAANFESHGFKTADLTHDELSKEHIRYMVGGRSPLALDERLFRFEFPERPGALMKFLSSMAPDWNISLFHYRNQGADYSSILVGLQVPQADHAEFERFLAALGYPYVEESANPAYRLFLS.

At Lys-52 the chain carries N6-(pyridoxal phosphate)lysine. Residues Asn-79, 182–186, and Ser-309 each bind pyridoxal 5'-phosphate; that span reads GGGGL. 2 ACT-like domains span residues 333–404 and 427–498; these read AVFA…DLTH and RLFR…EESA.

The protein belongs to the serine/threonine dehydratase family. As to quaternary structure, homotetramer. It depends on pyridoxal 5'-phosphate as a cofactor.

It carries out the reaction L-threonine = 2-oxobutanoate + NH4(+). The protein operates within amino-acid biosynthesis; L-isoleucine biosynthesis; 2-oxobutanoate from L-threonine: step 1/1. In terms of biological role, catalyzes the anaerobic formation of alpha-ketobutyrate and ammonia from threonine in a two-step reaction. The first step involved a dehydration of threonine and a production of enamine intermediates (aminocrotonate), which tautomerizes to its imine form (iminobutyrate). Both intermediates are unstable and short-lived. The second step is the nonenzymatic hydrolysis of the enamine/imine intermediates to form 2-ketobutyrate and free ammonia. In the low water environment of the cell, the second step is accelerated by RidA. This chain is L-threonine dehydratase biosynthetic IlvA (ilvA), found in Burkholderia multivorans (strain ATCC 17616 / 249).